A 296-amino-acid chain; its full sequence is Acetyl-coenzyme A carboxylase carboxyl transferase subunit beta (296 aa).

Residues 25 to 294 (VWTKCTSCEQ…PFVEPELISE (270 aa)) enclose the CoA carboxyltransferase N-terminal domain. Zn(2+) contacts are provided by Cys-29, Cys-32, Cys-48, and Cys-51. A C4-type zinc finger spans residues 29–51 (CTSCEQVLYSEELKRNLYVCPKC).

This sequence belongs to the AccD/PCCB family. In terms of assembly, acetyl-CoA carboxylase is a heterohexamer composed of biotin carboxyl carrier protein (AccB), biotin carboxylase (AccC) and two subunits each of ACCase subunit alpha (AccA) and ACCase subunit beta (AccD). Zn(2+) is required as a cofactor.

It localises to the cytoplasm. It catalyses the reaction N(6)-carboxybiotinyl-L-lysyl-[protein] + acetyl-CoA = N(6)-biotinyl-L-lysyl-[protein] + malonyl-CoA. Its pathway is lipid metabolism; malonyl-CoA biosynthesis; malonyl-CoA from acetyl-CoA: step 1/1. Functionally, component of the acetyl coenzyme A carboxylase (ACC) complex. Biotin carboxylase (BC) catalyzes the carboxylation of biotin on its carrier protein (BCCP) and then the CO(2) group is transferred by the transcarboxylase to acetyl-CoA to form malonyl-CoA. This Haemophilus influenzae (strain PittEE) protein is Acetyl-coenzyme A carboxylase carboxyl transferase subunit beta.